A 150-amino-acid polypeptide reads, in one-letter code: MDSLDEEQIGALQKAFDSFDTDSKGFITPETVGVILRMMGVKISEKNLQEVIAETDEDGSGELEFEEFVELAAKFLIEEDEEALKTELREAFRVYDKEGNGYITTDVLKEILRELDNRLTEEDLDSIIEEVDEDGSGTLDFNEFMEMMNG.

Met-1 bears the N-acetylmethionine mark. EF-hand domains lie at 7–42 (EQIGALQKAFDSFDTDSKGFITPETVGVILRMMGVK), 43–78 (ISEKNLQEVIAETDEDGSGELEFEEFVELAAKFLIE), 83–118 (ALKTELREAFRVYDKEGNGYITTDVLKEILRELDNR), and 119–150 (LTEEDLDSIIEEVDEDGSGTLDFNEFMEMMNG). Ca(2+) is bound by residues Asp-56, Asp-58, Ser-60, Glu-62, and Glu-67. Asp-132, Asp-134, Ser-136, Thr-138, and Glu-143 together coordinate Ca(2+).

The protein belongs to the troponin C family.

In terms of biological role, troponin is the central regulatory protein of striated muscle contraction. Tn consists of three components: Tn-I which is the inhibitor of actomyosin ATPase, Tn-T which contains the binding site for tropomyosin and Tn-C. The binding of calcium to Tn-C abolishes the inhibitory action of Tn on actin filaments. This chain is Troponin C, isoform 2A, found in Homarus americanus (American lobster).